A 261-amino-acid chain; its full sequence is Cytochrome c oxidase subunit 3 (261 aa).

Residues M1–P15 lie on the Mitochondrial matrix side of the membrane. Residues W16–W34 traverse the membrane as a helical segment. Residues F35–T40 lie on the Mitochondrial intermembrane side of the membrane. The helical transmembrane segment at T41 to T66 threads the bilayer. Residues F67 to T72 are Mitochondrial matrix-facing. A helical transmembrane segment spans residues P73 to S105. At L106–E128 the chain is on the mitochondrial intermembrane side. A helical membrane pass occupies residues V129 to T152. At E153–N155 the chain is on the mitochondrial matrix side. The chain crosses the membrane as a helical span at residues R156–E183. Residues A184–D190 are Mitochondrial intermembrane-facing. The chain crosses the membrane as a helical span at residues S191–I223. At K224–H232 the chain is on the mitochondrial matrix side. The helical transmembrane segment at F233–M256 threads the bilayer. The Mitochondrial intermembrane portion of the chain corresponds to Y257–S261.

It belongs to the cytochrome c oxidase subunit 3 family. As to quaternary structure, component of the cytochrome c oxidase (complex IV, CIV), a multisubunit enzyme composed of 14 subunits. The complex is composed of a catalytic core of 3 subunits MT-CO1, MT-CO2 and MT-CO3, encoded in the mitochondrial DNA, and 11 supernumerary subunits COX4I, COX5A, COX5B, COX6A, COX6B, COX6C, COX7A, COX7B, COX7C, COX8 and NDUFA4, which are encoded in the nuclear genome. The complex exists as a monomer or a dimer and forms supercomplexes (SCs) in the inner mitochondrial membrane with NADH-ubiquinone oxidoreductase (complex I, CI) and ubiquinol-cytochrome c oxidoreductase (cytochrome b-c1 complex, complex III, CIII), resulting in different assemblies (supercomplex SCI(1)III(2)IV(1) and megacomplex MCI(2)III(2)IV(2)).

The protein localises to the mitochondrion inner membrane. It catalyses the reaction 4 Fe(II)-[cytochrome c] + O2 + 8 H(+)(in) = 4 Fe(III)-[cytochrome c] + 2 H2O + 4 H(+)(out). Component of the cytochrome c oxidase, the last enzyme in the mitochondrial electron transport chain which drives oxidative phosphorylation. The respiratory chain contains 3 multisubunit complexes succinate dehydrogenase (complex II, CII), ubiquinol-cytochrome c oxidoreductase (cytochrome b-c1 complex, complex III, CIII) and cytochrome c oxidase (complex IV, CIV), that cooperate to transfer electrons derived from NADH and succinate to molecular oxygen, creating an electrochemical gradient over the inner membrane that drives transmembrane transport and the ATP synthase. Cytochrome c oxidase is the component of the respiratory chain that catalyzes the reduction of oxygen to water. Electrons originating from reduced cytochrome c in the intermembrane space (IMS) are transferred via the dinuclear copper A center (CU(A)) of subunit 2 and heme A of subunit 1 to the active site in subunit 1, a binuclear center (BNC) formed by heme A3 and copper B (CU(B)). The BNC reduces molecular oxygen to 2 water molecules using 4 electrons from cytochrome c in the IMS and 4 protons from the mitochondrial matrix. This chain is Cytochrome c oxidase subunit 3 (MT-CO3), found in Gallus gallus (Chicken).